A 76-amino-acid polypeptide reads, in one-letter code: Protein sigN132 (76 aa).

The segment covering 1–13 has biased composition (polar residues); it reads MLFESISTLSNLK. A disordered region spans residues 1–33; that stretch reads MLFESISTLSNLKSASKSSMIASTGSTSSKSSN. Over residues 14-33 the composition is skewed to low complexity; sequence SASKSSMIASTGSTSSKSSN.

The chain is Protein sigN132 from Dictyostelium discoideum (Social amoeba).